The primary structure comprises 345 residues: Ferritin-like-encapsulin shell fusion protein (345 aa).

The interval 1-109 is ferritin-like domain; the sequence is MLSINPTLIN…INDNKKEESN (109 aa). 3 residues coordinate Fe cation: Glu-31, Glu-61, and His-64. The interval 110–345 is encapsulin domain; that stretch reads VEYFEKLRSA…KNPEAIVVLE (236 aa).

In the N-terminal section; belongs to the ferritin-like superfamily. It in the C-terminal section; belongs to the encapsulin family. Family 1 subfamily. As to quaternary structure, 180 monomers assemble into 12 pentamers and 20 hexamers which further assemble into an icosahedral particle about 36.6 nm in diameter. The N-terminal domain (residues 1-99) crystallizes as 3 decamers.

The protein resides in the encapsulin nanocompartment. It carries out the reaction 4 Fe(2+) + O2 + 4 H(+) = 4 Fe(3+) + 2 H2O. With respect to regulation, the ferroxidase activity is inhibited by zinc. Its function is as follows. Fusion of the shell and cargo protein of a type 1 encapsulin nanocompartment. The nanocompartment is probably involved in iron storage. Expression in E.coli generates spherical particles (PfSPs) about 30 nm in diameter. The purified N-terminus has ferroxidase activity. The polypeptide is Ferritin-like-encapsulin shell fusion protein (Pyrococcus furiosus (strain ATCC 43587 / DSM 3638 / JCM 8422 / Vc1)).